Reading from the N-terminus, the 151-residue chain is Acidic phospholipase A2 3 (151 aa).

The first 27 residues, Met-1 to Leu-27, serve as a signal peptide directing secretion. Intrachain disulfides connect Cys-38–Cys-104, Cys-54–Cys-151, Cys-56–Cys-72, Cys-71–Cys-132, Cys-78–Cys-125, Cys-88–Cys-118, and Cys-111–Cys-123. 3 residues coordinate Ca(2+): Tyr-55, Gly-57, and Gly-59. His-75 is a catalytic residue. Asp-76 is a Ca(2+) binding site. The active site involves Asp-126.

This sequence belongs to the phospholipase A2 family. Group I subfamily. D49 sub-subfamily. Requires Ca(2+) as cofactor. In terms of tissue distribution, expressed by the venom gland.

Its subcellular location is the secreted. It carries out the reaction a 1,2-diacyl-sn-glycero-3-phosphocholine + H2O = a 1-acyl-sn-glycero-3-phosphocholine + a fatty acid + H(+). PLA2 catalyzes the calcium-dependent hydrolysis of the 2-acyl groups in 3-sn-phosphoglycerides. This chain is Acidic phospholipase A2 3, found in Tropidechis carinatus (Australian rough-scaled snake).